Consider the following 395-residue polypeptide: MLQAILDFYHSTGFYGLNMGSIIMMLVACVFLYLAIAKEFEPLLLVPISFGILLTNLPFAGMMAEPLLEVHEKLSASGAHLYTAHTAEPGGLLYYLFQGDHLGIFPPLIFLGVGAMTDFGPLISNPKSLLLGAAAQFGIFVTFFGAIASGLFTAQEAASIGIIGGADGPTAIFLSSKLAPHLMGPIAVAAYSYMALVPIIQPPIMTALTSETERKIKMSQLRLVSKREKIIFPIVVTILVSLIVPPAATLVGMLMLGNLFRECGVVGRLEDTAKNALINIITIFLGVTVGATATAEAFLKVETLAILGLGIVAFGIGTGSGVLLAKFMNKLSKEPINPLLGSAGVSAVPMAARVSQVVGQKADPTNFLLMHAMGPNVAGVIGSAVSAGVLLSLFG.

Transmembrane regions (helical) follow at residues 17–37 (LNMGSIIMMLVACVFLYLAIA), 43–63 (LLLVPISFGILLTNLPFAGMM), 103–123 (GIFPPLIFLGVGAMTDFGPLI), 128–148 (SLLLGAAAQFGIFVTFFGAIA), 180–200 (PHLMGPIAVAAYSYMALVPII), 230–250 (IIFPIVVTILVSLIVPPAATL), 278–298 (INIITIFLGVTVGATATAEAF), 304–324 (LAILGLGIVAFGIGTGSGVLL), and 374–394 (GPNVAGVIGSAVSAGVLLSLF).

It belongs to the GcdB/MmdB/OadB family. In terms of assembly, the methylmalonyl-CoA decarboxylase is composed of four subunits: the carboxyltransferase alpha subunit (MmdA), the tunnel beta subunit (MmdB), the biotin-containing gamma subunit (MmdC) and the delta subunit (MmdD). The N-terminus is blocked.

The protein localises to the cell membrane. It catalyses the reaction (S)-methylmalonyl-CoA + Na(+)(in) + H(+)(out) = propanoyl-CoA + Na(+)(out) + CO2. Its function is as follows. Tunnel subunit of the sodium ion pump methylmalonyl-CoA decarboxylase, which converts the chemical energy of a decarboxylation reaction into an electrochemical gradient of Na(+) ions across the cytoplasmic membrane, thereby creating a sodium ion motive force that is used for ATP synthesis. The beta subunit catalyzes the decarboxylation of the carboxybiotin carrier protein and the coupled export of Na(+) ions. In Propionigenium modestum, this protein is Methylmalonyl-CoA decarboxylase subunit beta.